The following is a 178-amino-acid chain: MSRIGRLPIPVPSGVDITVEGATITVKGPKGTLSHVVAEPIVVNTEDGRLLVTRPDDERRSRSLHGLTRTLVSNMVTGVTAGYSKTLEIVGVGYRVQAKGSDLEFALGYSHPVPVKAPEGIRFEVQTPTRFVVHGIDKQLVGEVSAKIRGLRKPDPYKGKGVRYQGEVVRRKVGKTGK.

This sequence belongs to the universal ribosomal protein uL6 family. In terms of assembly, part of the 50S ribosomal subunit.

Functionally, this protein binds to the 23S rRNA, and is important in its secondary structure. It is located near the subunit interface in the base of the L7/L12 stalk, and near the tRNA binding site of the peptidyltransferase center. This Frankia casuarinae (strain DSM 45818 / CECT 9043 / HFP020203 / CcI3) protein is Large ribosomal subunit protein uL6.